The chain runs to 352 residues: Potassium/proton antiporter CemA (352 aa).

3 consecutive transmembrane segments (helical) span residues 52–72 (VLVS…IHFF), 227–247 (IAAL…IILF), and 312–332 (IILL…KYWI).

The protein belongs to the CemA family.

The protein resides in the plastid. It is found in the chloroplast inner membrane. It carries out the reaction K(+)(in) + H(+)(out) = K(+)(out) + H(+)(in). In terms of biological role, contributes to K(+)/H(+) antiport activity by supporting proton efflux to control proton extrusion and homeostasis in chloroplasts in a light-dependent manner to modulate photosynthesis. Prevents excessive induction of non-photochemical quenching (NPQ) under continuous-light conditions. Indirectly promotes efficient inorganic carbon uptake into chloroplasts. The sequence is that of Potassium/proton antiporter CemA from Oltmannsiellopsis viridis (Marine flagellate).